The chain runs to 441 residues: tRNA modification GTPase MnmE (441 aa).

(6S)-5-formyl-5,6,7,8-tetrahydrofolate contacts are provided by R23, E81, and R121. Residues 219–366 (GFTVVLAGAP…LLDAIQAAAE (148 aa)) enclose the TrmE-type G domain. GTP is bound by residues 229 to 234 (NSGKST), 248 to 254 (SDSPGTT), and 273 to 276 (DTAG). S233 and T254 together coordinate Mg(2+). (6S)-5-formyl-5,6,7,8-tetrahydrofolate is bound at residue K441.

The protein belongs to the TRAFAC class TrmE-Era-EngA-EngB-Septin-like GTPase superfamily. TrmE GTPase family. As to quaternary structure, homodimer. Heterotetramer of two MnmE and two MnmG subunits. Requires K(+) as cofactor.

It is found in the cytoplasm. Exhibits a very high intrinsic GTPase hydrolysis rate. Involved in the addition of a carboxymethylaminomethyl (cmnm) group at the wobble position (U34) of certain tRNAs, forming tRNA-cmnm(5)s(2)U34. The chain is tRNA modification GTPase MnmE from Methylobacterium radiotolerans (strain ATCC 27329 / DSM 1819 / JCM 2831 / NBRC 15690 / NCIMB 10815 / 0-1).